A 325-amino-acid polypeptide reads, in one-letter code: Glyoxylate/hydroxypyruvate reductase B (325 aa).

Residues arginine 237 and glutamate 266 contribute to the active site. Histidine 285 serves as the catalytic Proton donor.

This sequence belongs to the D-isomer specific 2-hydroxyacid dehydrogenase family. GhrB subfamily. Homodimer.

Its subcellular location is the cytoplasm. It carries out the reaction glycolate + NADP(+) = glyoxylate + NADPH + H(+). It catalyses the reaction (R)-glycerate + NAD(+) = 3-hydroxypyruvate + NADH + H(+). The enzyme catalyses (R)-glycerate + NADP(+) = 3-hydroxypyruvate + NADPH + H(+). Catalyzes the NADPH-dependent reduction of glyoxylate and hydroxypyruvate into glycolate and glycerate, respectively. In Serratia proteamaculans (strain 568), this protein is Glyoxylate/hydroxypyruvate reductase B.